A 202-amino-acid polypeptide reads, in one-letter code: 7-methyl-GTP pyrophosphatase (202 aa).

Residue D70 is the Proton acceptor of the active site.

The protein belongs to the Maf family. YceF subfamily. A divalent metal cation serves as cofactor.

The protein resides in the cytoplasm. The catalysed reaction is N(7)-methyl-GTP + H2O = N(7)-methyl-GMP + diphosphate + H(+). Its function is as follows. Nucleoside triphosphate pyrophosphatase that hydrolyzes 7-methyl-GTP (m(7)GTP). May have a dual role in cell division arrest and in preventing the incorporation of modified nucleotides into cellular nucleic acids. The chain is 7-methyl-GTP pyrophosphatase from Pseudoalteromonas translucida (strain TAC 125).